Reading from the N-terminus, the 105-residue chain is uncharacterized protein (105 aa).

Positions 1-27 (MSLKSWHPQSKTKRVGASEGNPQWGSG) are disordered.

This is an uncharacterized protein from Homo sapiens (Human).